We begin with the raw amino-acid sequence, 678 residues long: DNA ligase (678 aa).

Residues 34 to 38 (DSEYD), 83 to 84 (SL), and Glu114 each bind NAD(+). Lys116 serves as the catalytic N6-AMP-lysine intermediate. 4 residues coordinate NAD(+): Arg137, Glu176, Lys293, and Lys317. Residues Cys411, Cys414, Cys429, and Cys435 each coordinate Zn(2+). The BRCT domain maps to 594–678 (PTRQPLNGES…LMAGYGQTLS (85 aa)).

It belongs to the NAD-dependent DNA ligase family. LigA subfamily. The cofactor is Mg(2+). Mn(2+) is required as a cofactor.

The catalysed reaction is NAD(+) + (deoxyribonucleotide)n-3'-hydroxyl + 5'-phospho-(deoxyribonucleotide)m = (deoxyribonucleotide)n+m + AMP + beta-nicotinamide D-nucleotide.. Its function is as follows. DNA ligase that catalyzes the formation of phosphodiester linkages between 5'-phosphoryl and 3'-hydroxyl groups in double-stranded DNA using NAD as a coenzyme and as the energy source for the reaction. It is essential for DNA replication and repair of damaged DNA. The polypeptide is DNA ligase (Acinetobacter baumannii (strain AB307-0294)).